Consider the following 1116-residue polypeptide: Large proline-rich protein bag6-B (1116 aa).

In terms of domain architecture, Ubiquitin-like spans 7-82; that stretch reads MDVTVKTLDS…HLVERAPPQT (76 aa). Disordered regions lie at residues 76 to 114, 170 to 221, 329 to 385, 473 to 502, 533 to 589, 640 to 678, and 1058 to 1080; these read ERAP…RNGN, EGQP…PSEY, STTG…HPHP, PAAP…APGA, GGSS…GTDQ, VPVS…ESLP, and TGAK…EAQG. A compositionally biased stretch (low complexity) spans 79–100; it reads PPQTQTSTSGPSTSSSTSPSSS. Residues 194 to 207 show a composition bias toward polar residues; the sequence is RETLPQTTQNADGQ. Low complexity predominate over residues 208–219; sequence SNSTPTSHPSPS. Positions 344–353 are enriched in polar residues; sequence GNATPSTNTS. 3 stretches are compositionally biased toward low complexity: residues 482–502, 535–580, and 641–652; these read PGAA…APGA, SSTS…SVPS, and PVSTSPPQSASQ. The segment covering 653-672 has biased composition (pro residues); the sequence is APPPPSSPAPPAHSAPPPAA. Residues 1068-1080 show a composition bias toward basic and acidic residues; sequence CVKRELDNSEAQG.

As to quaternary structure, component of the bag6/bat3 complex.

The protein localises to the cytoplasm. It is found in the cytosol. Its subcellular location is the nucleus. It localises to the secreted. The protein resides in the extracellular exosome. Its function is as follows. ATP-independent molecular chaperone preventing the aggregation of misfolded and hydrophobic patches-containing proteins. Functions as part of a cytosolic protein quality control complex, the bag6/bat3 complex, which maintains these client proteins in a soluble state and participates in their proper delivery to the endoplasmic reticulum or alternatively can promote their sorting to the proteasome where they undergo degradation. The bag6/bat3 complex is involved in the post-translational delivery of tail-anchored/type II transmembrane proteins to the endoplasmic reticulum membrane. Similarly, the bag6/bat3 complex also functions as a sorting platform for proteins of the secretory pathway that are mislocalized to the cytosol either delivering them to the proteasome for degradation or to the endoplasmic reticulum. The bag6/bat3 complex also plays a role in the endoplasmic reticulum-associated degradation (ERAD), a quality control mechanism that eliminates unwanted proteins of the endoplasmic reticulum through their retrotranslocation to the cytosol and their targeting to the proteasome. It maintains these retrotranslocated proteins in an unfolded yet soluble state condition in the cytosol to ensure their proper delivery to the proteasome. Also required for selective ubiquitin-mediated degradation of defective nascent chain polypeptides by the proteasome. Also involved in endoplasmic reticulum stress-induced pre-emptive quality control, a mechanism that selectively attenuates the translocation of newly synthesized proteins into the endoplasmic reticulum and reroutes them to the cytosol for proteasomal degradation. May ensure the proper degradation of these proteins and thereby protects the endoplasmic reticulum from protein overload upon stress. By stabilizing a large spectrum of proteins, may indirectly affect different biological processes including apoptosis. By controlling the steady-state expression of the IGF1R receptor, indirectly regulates the insulin-like growth factor receptor signaling pathway. When nuclear, may also act as a component of some chromatin regulator complex. The protein is Large proline-rich protein bag6-B of Xenopus laevis (African clawed frog).